The following is a 510-amino-acid chain: Nectin-4 (510 aa).

The first 31 residues, 1-31, serve as a signal peptide directing secretion; sequence MPLSLGAEMWGPEAWLLLLLLLASFTGRCPA. In terms of domain architecture, Ig-like V-type spans 32–144; that stretch reads GELETSDVVT…GSFQARLRLR (113 aa). Residues 32 to 349 are Extracellular-facing; it reads GELETSDVVT…GKQVDLVSAS (318 aa). Intrachain disulfides connect Cys52/Cys127, Cys171/Cys223, and Cys270/Cys315. 2 consecutive Ig-like C2-type domains span residues 148–237 and 248–331; these read PPLP…QRIT and ASVR…VTVD. N-linked (GlcNAc...) asparagine glycosylation is present at Asn281. A helical transmembrane segment spans residues 350-370; the sequence is VVVVGVIAALLFCLLVVVVVL. Residues 371-510 lie on the Cytoplasmic side of the membrane; sequence MSRYHRRKAQ…IYINGRGHLV (140 aa). Positions 399–412 are enriched in basic and acidic residues; that stretch reads RRLHSHHTDPRSQP. 2 disordered regions span residues 399 to 447 and 457 to 476; these read RRLH…SYST and QTEL…DQDE.

Belongs to the nectin family. As to quaternary structure, self-associates. Interacts via its Ig-like V-type domain with NECTIN1 Ig-like V-type domain. Interacts via its C-terminus with AFDN. (Microbial infection) Interacts (via N-terminus) with measles virus hemagglutinin protein. Post-translationally, the soluble form is produced by proteolytic cleavage at the cell surface (shedding), probably by ADAM17/TACE. As to expression, predominantly expressed in placenta. Not detected in normal breast epithelium but expressed in breast carcinoma.

Its subcellular location is the cell membrane. The protein localises to the cell junction. It is found in the adherens junction. It localises to the secreted. Its function is as follows. Seems to be involved in cell adhesion through trans-homophilic and -heterophilic interactions, the latter including specifically interactions with NECTIN1. Does not act as receptor for alpha-herpesvirus entry into cells. (Microbial infection) Acts as a receptor for measles virus. The protein is Nectin-4 of Homo sapiens (Human).